Here is an 81-residue protein sequence, read N- to C-terminus: ATP synthase subunit c (81 aa).

A run of 2 helical transmembrane segments spans residues Pro-3–Gly-23 and Leu-57–Ala-77.

It belongs to the ATPase C chain family. F-type ATPases have 2 components, F(1) - the catalytic core - and F(0) - the membrane proton channel. F(1) has five subunits: alpha(3), beta(3), gamma(1), delta(1), epsilon(1). F(0) has four main subunits: a(1), b(1), b'(1) and c(10-14). The alpha and beta chains form an alternating ring which encloses part of the gamma chain. F(1) is attached to F(0) by a central stalk formed by the gamma and epsilon chains, while a peripheral stalk is formed by the delta, b and b' chains.

The protein resides in the cellular thylakoid membrane. Its function is as follows. F(1)F(0) ATP synthase produces ATP from ADP in the presence of a proton or sodium gradient. F-type ATPases consist of two structural domains, F(1) containing the extramembraneous catalytic core and F(0) containing the membrane proton channel, linked together by a central stalk and a peripheral stalk. During catalysis, ATP synthesis in the catalytic domain of F(1) is coupled via a rotary mechanism of the central stalk subunits to proton translocation. In terms of biological role, key component of the F(0) channel; it plays a direct role in translocation across the membrane. A homomeric c-ring of between 10-14 subunits forms the central stalk rotor element with the F(1) delta and epsilon subunits. In Trichodesmium erythraeum (strain IMS101), this protein is ATP synthase subunit c.